The primary structure comprises 489 residues: Aerolysin (489 aa).

A signal peptide spans 1–24 (MMNRIITANLANLASSLMLAQVLG). 2 cysteine pairs are disulfide-bonded: Cys44-Cys100 and Cys184-Cys189. Residues 70–86 (WQITGLADRWVIMGPGY) are interaction with host N-linked glycan. The segment at 257–289 (YSLSEKVTTKNKFQWPLVGETELAIEIAASQSW) is part of the transmembrane beta-barrel after proteolytic activation of the toxin and insertion into the host membrane. The interaction with glycans from host GPI-anchor stretch occupies residues 347 to 356 (RWGGNAWYTH). The propeptide occupies 445–489 (TRSAKAAQLRSASAEEVALTSVDLDSEALANEGFGNVSLTIVPVQ).

It belongs to the aerolysin family. As to quaternary structure, homodimer in solution; homoheptamer in the host membrane. After binding to GPI-anchored proteins in target membranes and proteolytic removal of the C-terminal propeptide, the protein assembles into a heptameric pre-pore complex. A further conformation change leads to insertion into the host membrane. Proteolytic cleavage and subsequent release of the propeptide trigger a major conformation change, leading to the formation of a heptameric pre-pore that then inserts into the host membrane.

The protein resides in the secreted. Its subcellular location is the host cell membrane. Its function is as follows. Secreted, cytolytic toxin that forms pores in host membranes after proteolytic removal of a C-terminal propeptide, leading to destruction of the membrane permeability barrier and cell death. The pores are formed by transmembrane beta-strands and are approximately 3 nm in diameter. In Aeromonas salmonicida, this protein is Aerolysin (ash3).